A 146-amino-acid chain; its full sequence is Anti-sigma F factor (146 aa).

This sequence belongs to the anti-sigma-factor family.

It catalyses the reaction L-seryl-[protein] + ATP = O-phospho-L-seryl-[protein] + ADP + H(+). The enzyme catalyses L-threonyl-[protein] + ATP = O-phospho-L-threonyl-[protein] + ADP + H(+). Functionally, binds to sigma F and blocks its ability to form an RNA polymerase holoenzyme (E-sigma F). Phosphorylates SpoIIAA on a serine residue. This phosphorylation may enable SpoIIAA to act as an anti-anti-sigma factor that counteracts SpoIIAB and thus releases sigma F from inhibition. This Geobacillus sp. (strain WCH70) protein is Anti-sigma F factor.